We begin with the raw amino-acid sequence, 114 residues long: MHEITLSQRALEIIEQQAQQAGARRVTGVWLKVGAFSCVEASALTFCFELVCRGTLAEGCELHIAEQQAECWCDRCQQYVHLVSQHVRRCPHCNNDQLQIVADDGLQIQRLELE.

Histidine 2 provides a ligand contact to Ni(2+). Positions 73, 76, 90, and 93 each coordinate Zn(2+).

This sequence belongs to the HypA/HybF family.

In terms of biological role, involved in the maturation of [NiFe] hydrogenases. Required for nickel insertion into the metal center of the hydrogenase. The sequence is that of Hydrogenase maturation factor HypA from Klebsiella pneumoniae subsp. pneumoniae (strain ATCC 700721 / MGH 78578).